The primary structure comprises 106 residues: Iron-sulfur cluster assembly protein CyaY (106 aa).

It belongs to the frataxin family.

Involved in iron-sulfur (Fe-S) cluster assembly. May act as a regulator of Fe-S biogenesis. This is Iron-sulfur cluster assembly protein CyaY from Salmonella schwarzengrund (strain CVM19633).